The chain runs to 427 residues: Synaptotagmin-A (427 aa).

Residues 1-57 (MKLTEAYHDALAALPATPPLPTAVANATEAAAGSEEGKQDGFSKVKVKEKFMNELNK) lie on the Vesicular side of the membrane. Asparagine 26 carries N-linked (GlcNAc...) asparagine glycosylation. A helical membrane pass occupies residues 58 to 84 (IPLPPWALVAIAIVAIILGLTCCFCIC). At 85–427 (KKCLLKKKNK…EVDATLGMKK (343 aa)) the chain is on the cytoplasmic side. The disordered stretch occupies residues 96–145 (KGKEKGGKNAMTMKDVKEMGKSGKEQALKDEDEDAETGLTTDGKEEEKED). A compositionally biased stretch (basic and acidic residues) spans 109-124 (KDVKEMGKSGKEQALK). The interval 141-387 (EEKEDEKLGK…AIGKVFVGYN (247 aa)) is phospholipid binding. C2 domains follow at residues 147 to 266 (KLGK…EEWR) and 278 to 411 (KLGD…AQWH). Ca(2+)-binding residues include leucine 177, aspartate 178, aspartate 184, aspartate 236, phenylalanine 237, aspartate 238, serine 241, lysine 242, aspartate 244, aspartate 309, aspartate 315, aspartate 369, aspartate 371, and aspartate 377.

This sequence belongs to the synaptotagmin family. In terms of assembly, homodimer or homotrimer (possible). It depends on Ca(2+) as a cofactor. Forebrain, cerebellum and neuroendocrine cells.

The protein resides in the cytoplasmic vesicle. It is found in the secretory vesicle. Its subcellular location is the synaptic vesicle membrane. It localises to the synapse. May have a regulatory role in the membrane interactions during trafficking of synaptic vesicles at the active zone of the synapse. It binds acidic phospholipids with a specificity that requires the presence of both an acidic head group and a diacyl backbone. This chain is Synaptotagmin-A (P65-A), found in Diplobatis ommata (Ocellated electric ray).